We begin with the raw amino-acid sequence, 472 residues long: uncharacterized protein (472 aa).

It belongs to the AllG family.

This is an uncharacterized protein from Escherichia coli (strain K12).